The sequence spans 37 residues: Cytochrome b6-f complex subunit 5 (37 aa).

A helical transmembrane segment spans residues 5 to 25 (LLSGIVLGLVPITITGLLVTA).

This sequence belongs to the PetG family. The 4 large subunits of the cytochrome b6-f complex are cytochrome b6, subunit IV (17 kDa polypeptide, PetD), cytochrome f and the Rieske protein, while the 4 small subunits are PetG, PetL, PetM and PetN. The complex functions as a dimer.

The protein resides in the plastid. The protein localises to the chloroplast thylakoid membrane. Functionally, component of the cytochrome b6-f complex, which mediates electron transfer between photosystem II (PSII) and photosystem I (PSI), cyclic electron flow around PSI, and state transitions. PetG is required for either the stability or assembly of the cytochrome b6-f complex. In Tupiella akineta (Green alga), this protein is Cytochrome b6-f complex subunit 5.